Consider the following 180-residue polypeptide: Shikimate kinase (180 aa).

Residue 14-19 participates in ATP binding; that stretch reads GAGKSC. Residue S18 participates in Mg(2+) binding. Substrate is bound by residues D36, R60, and G82. R120 lines the ATP pocket. R139 contributes to the substrate binding site.

Belongs to the shikimate kinase family. As to quaternary structure, monomer. The cofactor is Mg(2+).

Its subcellular location is the cytoplasm. It catalyses the reaction shikimate + ATP = 3-phosphoshikimate + ADP + H(+). The protein operates within metabolic intermediate biosynthesis; chorismate biosynthesis; chorismate from D-erythrose 4-phosphate and phosphoenolpyruvate: step 5/7. Catalyzes the specific phosphorylation of the 3-hydroxyl group of shikimic acid using ATP as a cosubstrate. The sequence is that of Shikimate kinase from Xanthomonas campestris pv. campestris (strain 8004).